Reading from the N-terminus, the 359-residue chain is Tryptophan 2,3-dioxygenase (359 aa).

Substrate is bound by residues 38-42 (FIIVH) and Arg109. His295 contacts heme. Thr309 lines the substrate pocket.

This sequence belongs to the tryptophan 2,3-dioxygenase family. In terms of assembly, homotetramer. Requires heme as cofactor.

It carries out the reaction L-tryptophan + O2 = N-formyl-L-kynurenine. It participates in amino-acid degradation; L-tryptophan degradation via kynurenine pathway; L-kynurenine from L-tryptophan: step 1/2. In terms of biological role, heme-dependent dioxygenase that catalyzes the oxidative cleavage of the L-tryptophan (L-Trp) pyrrole ring and converts L-tryptophan to N-formyl-L-kynurenine. Catalyzes the oxidative cleavage of the indole moiety. This is Tryptophan 2,3-dioxygenase from Bdellovibrio bacteriovorus (strain ATCC 15356 / DSM 50701 / NCIMB 9529 / HD100).